A 252-amino-acid chain; its full sequence is uncharacterized protein (252 aa).

Residue 9–33 (LITGGSAGIGLELAKRLLELGNEVI) coordinates NADP(+). Substrate is bound at residue Ser-139. Tyr-152 acts as the Proton acceptor in catalysis.

This sequence belongs to the short-chain dehydrogenases/reductases (SDR) family.

The protein resides in the cytoplasm. This is an uncharacterized protein from Bacillus subtilis (strain 168).